Reading from the N-terminus, the 88-residue chain is HssA/B-like protein 9 (88 aa).

A compositionally biased stretch (polar residues) spans 1 to 14; that stretch reads MSILSALTSISNPM. Residues 1-26 form a disordered region; that stretch reads MSILSALTSISNPMKSSKSSVANGGG.

The protein belongs to the hssA/B family.

The polypeptide is HssA/B-like protein 9 (hssl9) (Dictyostelium discoideum (Social amoeba)).